The chain runs to 123 residues: Ribonuclease P protein component 2 (123 aa).

It belongs to the eukaryotic/archaeal RNase P protein component 2 family. In terms of assembly, consists of a catalytic RNA component and at least 4-5 protein subunits.

The protein resides in the cytoplasm. It catalyses the reaction Endonucleolytic cleavage of RNA, removing 5'-extranucleotides from tRNA precursor.. Part of ribonuclease P, a protein complex that generates mature tRNA molecules by cleaving their 5'-ends. The sequence is that of Ribonuclease P protein component 2 from Sulfurisphaera tokodaii (strain DSM 16993 / JCM 10545 / NBRC 100140 / 7) (Sulfolobus tokodaii).